Consider the following 505-residue polypeptide: Maturase K (505 aa).

The protein belongs to the intron maturase 2 family. MatK subfamily.

The protein localises to the plastid. It localises to the chloroplast. Its function is as follows. Usually encoded in the trnK tRNA gene intron. Probably assists in splicing its own and other chloroplast group II introns. This chain is Maturase K, found in Elaeagnus umbellata (Autumn olive).